We begin with the raw amino-acid sequence, 856 residues long: Serine/threonine-protein phosphatase 6 regulatory subunit 1 (856 aa).

Positions 10–403 (SSHLDTLLEK…VFNNFLHAQV (394 aa)) are interaction with PPP6C. S232 carries the phosphoserine modification. T524 carries the phosphothreonine modification. Phosphoserine is present on residues S529, S530, and S531. Over residues 621-630 (DDEEEEEEEG) the composition is skewed to acidic residues. 2 disordered regions span residues 621-770 (DDEE…KVAE) and 792-856 (RSAP…SGSQ). Residues S633 and S636 each carry the phosphoserine modification. The segment covering 644-656 (QGSQPVRASQASQ) has biased composition (polar residues). Residues 667 to 683 (DSEEEDEEEDEEEDEGA) show a composition bias toward acidic residues. A phosphoserine mark is found at S698 and S739. Over residues 794-809 (APSSLDSATRDPSTSV) the composition is skewed to polar residues. S826 is modified (phosphoserine). Residues 842 to 856 (PNGSTPGGPISSGSQ) are compositionally biased toward low complexity.

It belongs to the SAPS family. Protein phosphatase 6 (PP6) holoenzyme is proposed to be a heterotrimeric complex formed of the catalytic subunit, a SAPS domain-containing subunit (PP6R) and an ankyrin repeat-domain containing regulatory subunit (ARS). Interacts with PPP6C and NFKBIE. Interacts with ANKRD28, ANKRD44 and ANKRD52. In terms of tissue distribution, ubiquitous with highest expression in lung, spleen and bladder.

It is found in the cytoplasm. Its function is as follows. Regulatory subunit of protein phosphatase 6 (PP6). May function as a scaffolding PP6 subunit. Involved in the PP6-mediated dephosphorylation of NFKBIE opposing its degradation in response to TNF-alpha. This chain is Serine/threonine-protein phosphatase 6 regulatory subunit 1 (Ppp6r1), found in Mus musculus (Mouse).